Reading from the N-terminus, the 378-residue chain is Succinyl-diaminopimelate desuccinylase (378 aa).

H67 serves as a coordination point for Zn(2+). D69 is an active-site residue. D100 is a Zn(2+) binding site. The active-site Proton acceptor is E134. Residues E135, E163, and H349 each coordinate Zn(2+).

Belongs to the peptidase M20A family. DapE subfamily. As to quaternary structure, homodimer. Requires Zn(2+) as cofactor. Co(2+) is required as a cofactor.

The enzyme catalyses N-succinyl-(2S,6S)-2,6-diaminopimelate + H2O = (2S,6S)-2,6-diaminopimelate + succinate. It participates in amino-acid biosynthesis; L-lysine biosynthesis via DAP pathway; LL-2,6-diaminopimelate from (S)-tetrahydrodipicolinate (succinylase route): step 3/3. Functionally, catalyzes the hydrolysis of N-succinyl-L,L-diaminopimelic acid (SDAP), forming succinate and LL-2,6-diaminopimelate (DAP), an intermediate involved in the bacterial biosynthesis of lysine and meso-diaminopimelic acid, an essential component of bacterial cell walls. This chain is Succinyl-diaminopimelate desuccinylase, found in Pasteurella multocida (strain Pm70).